The primary structure comprises 206 residues: Oligoribonuclease (206 aa).

The Exonuclease domain maps to 20 to 183 (LVWLDMEMTG…ADIHESIDEL (164 aa)). The active site involves Tyr-141.

Belongs to the oligoribonuclease family.

It is found in the cytoplasm. 3'-to-5' exoribonuclease specific for small oligoribonucleotides. In Burkholderia cenocepacia (strain HI2424), this protein is Oligoribonuclease.